A 265-amino-acid polypeptide reads, in one-letter code: Orotidine 5'-phosphate decarboxylase (265 aa).

Residues Asp38, Lys60–His62, Asp92–Thr101, Tyr218, and Arg236 each bind substrate. Lys94 functions as the Proton donor in the catalytic mechanism.

Belongs to the OMP decarboxylase family.

The catalysed reaction is orotidine 5'-phosphate + H(+) = UMP + CO2. It participates in pyrimidine metabolism; UMP biosynthesis via de novo pathway; UMP from orotate: step 2/2. This Cyberlindnera fabianii (Yeast) protein is Orotidine 5'-phosphate decarboxylase (URA3).